We begin with the raw amino-acid sequence, 195 residues long: 22.0 kDa heat shock protein (195 aa).

The signal sequence occupies residues 1–21 (MMKHLLSIFFIGALLLGNIKT). Residues 62–180 (RDTSVALSPA…GPRVVNIAAE (119 aa)) enclose the sHSP domain. The N-linked (GlcNAc...) asparagine glycan is linked to Asn160.

It belongs to the small heat shock protein (HSP20) family. May form oligomeric structures.

Its subcellular location is the endoplasmic reticulum. The sequence is that of 22.0 kDa heat shock protein (HSP22.0) from Arabidopsis thaliana (Mouse-ear cress).